Consider the following 714-residue polypeptide: VIN3-like protein 2 (714 aa).

The PHD-type zinc-finger motif lies at 164-232 (RCSCCICRKY…CFYCVSCGKA (69 aa)). The Nuclear localization signal signature appears at 239 to 246 (WKKQLTIA). One can recognise a Fibronectin type-III domain in the interval 366–463 (GSTKIRFEDV…INVLTRSAEE (98 aa)). Over residues 478-498 (LTNCSTLSSNPSSVEAESNND) the composition is skewed to polar residues. The tract at residues 478–530 (LTNCSTLSSNPSSVEAESNNDYIVPKKPSSKNEDNNSPSVDESAAKRMKRTTD) is disordered. Residues 602–714 (SMKDNCNNGD…PSGFCMKLWH (113 aa)) form a VIN3-Interacting Domain (VID) region.

As to quaternary structure, self-interacts. Interacts with VIN3 and VIL1. Component of the plant homeodomain / polycomb repressive complex 2 (PHD-PRC2) large complex during prolonged cold, composed of core PRC2 components (VRN2, EZA1, FIE and MSI1), and three related PHD finger proteins (VIL1, VIL2 and VIN3) that mediates histone H3 trimethylation on 'Lys-27' (H3K27me3).

The protein localises to the nucleus. Functionally, maybe involved in both the vernalization and photoperiod pathways by regulating gene expression. Binds preferentially to dimethylated histone H3 'Lys-9' (H3K9me2). Promotes flowering in non-inductive photoperiods (e.g. short days) through the maintenance of the epigenetically repressed state of MAF5 via H3K9me2 and plant homeodomain / polycomb repressive complex 2 (PHD-PRC2)-dependent H3K27me3. This is VIN3-like protein 2 (VIL2) from Arabidopsis thaliana (Mouse-ear cress).